The chain runs to 371 residues: Flagellar P-ring protein (371 aa).

The first 24 residues, 1–24, serve as a signal peptide directing secretion; that stretch reads MSIRVLLFSIFTGFLLAAAGPALA. The segment covering 301-321 has biased composition (polar residues); it reads PQPFSSGTTATQPQTDISAQK. Residues 301 to 322 form a disordered region; sequence PQPFSSGTTATQPQTDISAQKT.

Belongs to the FlgI family. The basal body constitutes a major portion of the flagellar organelle and consists of four rings (L,P,S, and M) mounted on a central rod.

The protein localises to the periplasm. The protein resides in the bacterial flagellum basal body. Its function is as follows. Assembles around the rod to form the L-ring and probably protects the motor/basal body from shearing forces during rotation. This Allorhizobium ampelinum (strain ATCC BAA-846 / DSM 112012 / S4) (Agrobacterium vitis (strain S4)) protein is Flagellar P-ring protein.